We begin with the raw amino-acid sequence, 971 residues long: Putative helicase 184R (971 aa).

The tract at residues 506-528 is disordered; that stretch reads GYEPSDSGFGFDDDDSASTSGGK. Residues 624 to 807 form the SF3 helicase domain; that stretch reads PKVIKMLNFF…FKDSIDDISL (184 aa). 668–675 is an ATP binding site; that stretch reads GEGDNGKS.

This sequence belongs to the IIV-6 184R family.

In Acheta domesticus (House cricket), this protein is Putative helicase 184R.